The chain runs to 266 residues: Glucosamine-6-phosphate deaminase (266 aa).

Aspartate 72 serves as the catalytic Proton acceptor; for enolization step. The active-site For ring-opening step is aspartate 141. The Proton acceptor; for ring-opening step role is filled by histidine 143. The active-site For ring-opening step is the glutamate 148.

Belongs to the glucosamine/galactosamine-6-phosphate isomerase family. NagB subfamily. In terms of assembly, homohexamer.

It carries out the reaction alpha-D-glucosamine 6-phosphate + H2O = beta-D-fructose 6-phosphate + NH4(+). It functions in the pathway amino-sugar metabolism; N-acetylneuraminate degradation; D-fructose 6-phosphate from N-acetylneuraminate: step 5/5. Allosterically activated by N-acetylglucosamine 6-phosphate (GlcNAc6P). Functionally, catalyzes the reversible isomerization-deamination of glucosamine 6-phosphate (GlcN6P) to form fructose 6-phosphate (Fru6P) and ammonium ion. The protein is Glucosamine-6-phosphate deaminase of Yersinia enterocolitica serotype O:8 / biotype 1B (strain NCTC 13174 / 8081).